The chain runs to 533 residues: MKITNPVLKGFNPDPSICRAGEDYYIAVSTFEWFPGVQIHHSKDLVNWHLVAHPLQRVSQLDMKGNPNSGGVWAPCLSYSDGKFWLIYTDVKVVDGAWKDCHNYLVTCETINGDWSEPIKLNSSGFDASLFHDTDGKKYLLNMLWDHRIDRHSFGGIVIQEYSDKEQKLIGKPKVIFEGTDRKLTEAPHLYHIGNYYYLLTAEGGTRYEHAATIARSANIEGPYEVHPDNPILTSWHDPGNPLQKCGHASIVQTHTDEWYLAHLTGRPIHPDDDSIFQQRGYCPLGRETAIQKLYWKDEWPYVVGGKEGSLEVDAPSIPETIFEATYPEVDEFEDSTLNINFQTLRIPFTNELGSLTQAPNHLRLFGHESLTSTFTQAFVARRWQSLHFEAETAVEFYPENFQQAAGLVNYYNTENWTALQVTHDEELGRILELTICDNFSFSQPLNNKIVIPREVKYVYLRVNIEKDKYYYFYSFNKEDWHKIDIALESKKLSDDYIRGGGFFTGAFVGMQCQDTSGNHIPADFRYFRYKEK.

The Proton acceptor role is filled by Asp-14. The active-site Proton donor is the Glu-186.

Belongs to the glycosyl hydrolase 43 family. As to quaternary structure, homodimer.

It localises to the cell membrane. It catalyses the reaction Hydrolysis of (1-&gt;4)-beta-D-xylans, to remove successive D-xylose residues from the non-reducing termini.. The sequence is that of Beta-xylosidase (xynB) from Bacillus subtilis (strain 168).